We begin with the raw amino-acid sequence, 658 residues long: Carnitine O-palmitoyltransferase 2, mitochondrial (658 aa).

A mitochondrion-targeting transit peptide spans 1–25 (MMPRLLFRAWPRCPSLVLGAPSRPL). The Mitochondrial matrix segment spans residues 26–178 (SAVSGPDDYL…GLLEPEVFHL (153 aa)). N6-succinyllysine is present on residues lysine 69 and lysine 85. An intramembrane region (note=Mitochondrial inner membrane) is located at residues 179 to 208 (NPSKSDTDAFKRLIRFVPPSLSWYGAYLVN). Over 209 to 658 (AYPLDMSQYF…DALEGKAIKT (450 aa)) the chain is Mitochondrial matrix. Lysine 239 carries the N6-acetyllysine; alternate modification. An N6-succinyllysine; alternate modification is found at lysine 239. Lysine 305 bears the N6-acetyllysine mark. Residue histidine 372 is the Proton acceptor of the active site. N6-succinyllysine is present on residues lysine 424 and lysine 439. 452–464 (GKEFLKKKQLSPD) contacts CoA. Residues tyrosine 486, serine 488, and threonine 499 each coordinate (R)-carnitine. Lysine 510 and lysine 544 each carry N6-acetyllysine; alternate. 2 positions are modified to N6-succinyllysine; alternate: lysine 510 and lysine 544.

The protein belongs to the carnitine/choline acetyltransferase family.

The protein localises to the mitochondrion inner membrane. It carries out the reaction (R)-carnitine + hexadecanoyl-CoA = O-hexadecanoyl-(R)-carnitine + CoA. It catalyses the reaction octanoyl-CoA + (R)-carnitine = O-octanoyl-(R)-carnitine + CoA. The catalysed reaction is decanoyl-CoA + (R)-carnitine = O-decanoyl-(R)-carnitine + CoA. The enzyme catalyses dodecanoyl-CoA + (R)-carnitine = O-dodecanoyl-R-carnitine + CoA. It carries out the reaction tetradecanoyl-CoA + (R)-carnitine = O-tetradecanoyl-(R)-carnitine + CoA. It catalyses the reaction (R)-carnitine + octadecanoyl-CoA = O-octadecanoyl-(R)-carnitine + CoA. The catalysed reaction is eicosanoyl-CoA + (R)-carnitine = O-eicosanoyl-(R)-carnitine + CoA. The enzyme catalyses (9Z)-tetradecenoyl-CoA + (R)-carnitine = O-(9Z)-tetradecenoyl-(R)-carnitine + CoA. It carries out the reaction (5Z)-tetradecenoyl-CoA + (R)-carnitine = O-(5Z)-tetradecenoyl-(R)-carnitine + CoA. It catalyses the reaction (R)-carnitine + (9Z)-octadecenoyl-CoA = O-(9Z)-octadecenoyl-(R)-carnitine + CoA. The catalysed reaction is 4,8-dimethylnonanoyl-CoA + (R)-carnitine = O-4,8-dimethylnonanoyl-(R)-carnitine + CoA. The protein operates within lipid metabolism; fatty acid beta-oxidation. In terms of biological role, involved in the intramitochondrial synthesis of acylcarnitines from accumulated acyl-CoA metabolites. Reconverts acylcarnitines back into the respective acyl-CoA esters that can then undergo beta-oxidation, an essential step for the mitochondrial uptake of long-chain fatty acids and their subsequent beta-oxidation in the mitochondrion. Active with medium (C8-C12) and long-chain (C14-C18) acyl-CoA esters. This Rattus norvegicus (Rat) protein is Carnitine O-palmitoyltransferase 2, mitochondrial.